Reading from the N-terminus, the 480-residue chain is tRNA (guanine(37)-N(1))-methyltransferase (480 aa).

The N-terminal 18 residues, 1 to 18 (MAAVWRRSARLFILLQRH), are a transit peptide targeting the mitochondrion. S-adenosyl-L-methionine-binding positions include histidine 273, 311–312 (DL), 339–340 (DG), and asparagine 367. The tract at residues 458–480 (HTQDRDTSEEPCPKKQKCEDSTN) is disordered.

Belongs to the class I-like SAM-binding methyltransferase superfamily. TRM5/TYW2 family. Monomer.

It localises to the mitochondrion matrix. It is found in the nucleus. The protein resides in the cytoplasm. The catalysed reaction is guanosine(37) in tRNA + S-adenosyl-L-methionine = N(1)-methylguanosine(37) in tRNA + S-adenosyl-L-homocysteine + H(+). In terms of biological role, involved in mitochondrial tRNA methylation. Specifically methylates the N1 position of guanosine-37 in various tRNAs. Methylation is not dependent on the nature of the nucleoside 5' of the target nucleoside. This is the first step in the biosynthesis of wybutosine (yW), a modified base adjacent to the anticodon of tRNAs and required for accurate decoding. In Danio rerio (Zebrafish), this protein is tRNA (guanine(37)-N(1))-methyltransferase (trmt5).